The following is a 181-amino-acid chain: Ribonuclease M5 (181 aa).

The Toprim domain occupies 3–86 (KEVIVVEGRD…AYISQEEGTK (84 aa)). The Mg(2+) site is built by glutamate 9, aspartate 55, and aspartate 57.

It belongs to the ribonuclease M5 family. It depends on Mg(2+) as a cofactor.

It localises to the cytoplasm. The catalysed reaction is Endonucleolytic cleavage of RNA, removing 21 and 42 nucleotides, respectively, from the 5'- and 3'-termini of a 5S-rRNA precursor.. Its function is as follows. Required for correct processing of both the 5' and 3' ends of 5S rRNA precursor. Cleaves both sides of a double-stranded region yielding mature 5S rRNA in one step. This Clostridium botulinum (strain Hall / ATCC 3502 / NCTC 13319 / Type A) protein is Ribonuclease M5.